We begin with the raw amino-acid sequence, 448 residues long: Trigger factor (448 aa).

In terms of domain architecture, PPIase FKBP-type spans 172 to 257; that stretch reads GDRVTVDFVG…MKKIEWPHLP (86 aa).

The protein belongs to the FKBP-type PPIase family. Tig subfamily.

The protein resides in the cytoplasm. It carries out the reaction [protein]-peptidylproline (omega=180) = [protein]-peptidylproline (omega=0). Functionally, involved in protein export. Acts as a chaperone by maintaining the newly synthesized protein in an open conformation. Functions as a peptidyl-prolyl cis-trans isomerase. In Burkholderia lata (strain ATCC 17760 / DSM 23089 / LMG 22485 / NCIMB 9086 / R18194 / 383), this protein is Trigger factor.